A 631-amino-acid chain; its full sequence is Probable electron transfer flavoprotein-ubiquinone oxidoreductase, mitochondrial (631 aa).

65–79 lines the FAD pocket; that stretch reads VCIVGGGPAGLATAI. The [4Fe-4S] cluster site is built by Cys574, Cys600, Cys603, and Cys606. A 4Fe-4S ferredoxin-type domain is found at 591–620; that stretch reads TRLQINSQNCIHCKTCDIKAPRQDITWKVP.

Belongs to the ETF-QO/FixC family. [4Fe-4S] cluster is required as a cofactor. It depends on FAD as a cofactor.

The protein localises to the mitochondrion inner membrane. It catalyses the reaction a ubiquinone + reduced [electron-transfer flavoprotein] = a ubiquinol + oxidized [electron-transfer flavoprotein] + H(+). Functionally, accepts electrons from ETF and reduces ubiquinone. The chain is Probable electron transfer flavoprotein-ubiquinone oxidoreductase, mitochondrial (CIR2) from Saccharomyces cerevisiae (strain ATCC 204508 / S288c) (Baker's yeast).